The following is a 224-amino-acid chain: PKHD-type hydroxylase Tgr7_2199 (224 aa).

The 99-residue stretch at 78–176 (KLSGAFFARY…RLVAVAWAES (99 aa)) folds into the Fe2OG dioxygenase domain. Fe cation is bound by residues His96, Asp98, and His157. Residue Arg167 participates in 2-oxoglutarate binding.

The cofactor is Fe(2+). L-ascorbate serves as cofactor.

The sequence is that of PKHD-type hydroxylase Tgr7_2199 from Thioalkalivibrio sulfidiphilus (strain HL-EbGR7).